The sequence spans 612 residues: Indole-3-acetic acid-amido synthetase GH3.5 (612 aa).

The protein belongs to the IAA-amido conjugating enzyme family.

Functionally, catalyzes the synthesis of indole-3-acetic acid (IAA)-amino acid conjugates, providing a mechanism for the plant to cope with the presence of excess auxin. Strongly reactive with Glu, Gln, Trp, Asp, Ala, Leu, Phe, Gly, Tyr, Met, Ile and Val. Little or no product formation with His, Ser, Thr, Arg, Lys, or Cys. Also active on pyruvic and butyric acid analogs of IAA, PAA and the synthetic auxin naphthaleneacetic acid (NAA). The two chlorinated synthetic auxin herbicides 2,4-D and 3,6-dichloro-o-anisic acid (dicamba) cannot be used as substrates. The polypeptide is Indole-3-acetic acid-amido synthetase GH3.5 (GH3.5) (Arabidopsis thaliana (Mouse-ear cress)).